The following is a 1860-amino-acid chain: Probable helicase with zinc finger domain (1860 aa).

A C3H1-type zinc finger spans residues 168-196; the sequence is SEEYTLCKRFLEQGLCRYGAQCTSAHSQE. Residue 661–668 participates in ATP binding; the sequence is GPYGTGKT. The DEAA box signature appears at 787–790; sequence DEAA. 6 disordered regions span residues 1106 to 1136, 1158 to 1177, 1286 to 1317, 1556 to 1604, 1641 to 1709, and 1749 to 1860; these read RSQH…TEPF, TPPG…VQRL, ERKA…GFPA, IQPR…PPDH, RQDP…RYPS, and MSEE…TYFK. Low complexity predominate over residues 1107 to 1116; the sequence is SQHPPQQGPG. Basic and acidic residues predominate over residues 1286–1298; the sequence is ERKAPELKEKQGD. Over residues 1301–1313 the composition is skewed to polar residues; the sequence is SVQNKSPEPQSNM. The span at 1641–1660 shows a compositional bias: low complexity; that stretch reads RQDPGPLQHQQQKQQLQAPQ. 2 stretches are compositionally biased toward pro residues: residues 1760 to 1769 and 1783 to 1794; these read QPPPPPPPHP and PLLPSKQTPPDP. The span at 1847–1860 shows a compositional bias: low complexity; sequence GSSNSSNGYYTYFK.

The protein belongs to the DNA2/NAM7 helicase family.

Its subcellular location is the nucleus. Its function is as follows. May act as a helicase. The protein is Probable helicase with zinc finger domain (helz) of Danio rerio (Zebrafish).